The sequence spans 254 residues: NAD-dependent protein deacylase 2 (254 aa).

Residues 1 to 254 enclose the Deacetylase sirtuin-type domain; it reads MDEHSIMQAV…LPALVRRLGV (254 aa). 24-44 lines the NAD(+) pocket; it reads GAGMSADSGLETYRDPETGVW. Substrate is bound by residues Tyr-69 and Arg-72. NAD(+) is bound at residue 105-108; that stretch reads QNID. His-123 acts as the Proton acceptor in catalysis. 4 residues coordinate Zn(2+): Cys-131, Cys-134, Cys-157, and Cys-160. NAD(+)-binding positions include 197–199 and Ala-241; that span reads GTS.

It belongs to the sirtuin family. Class III subfamily. Zn(2+) is required as a cofactor.

The protein localises to the cytoplasm. It catalyses the reaction N(6)-acetyl-L-lysyl-[protein] + NAD(+) + H2O = 2''-O-acetyl-ADP-D-ribose + nicotinamide + L-lysyl-[protein]. It carries out the reaction N(6)-succinyl-L-lysyl-[protein] + NAD(+) + H2O = 2''-O-succinyl-ADP-D-ribose + nicotinamide + L-lysyl-[protein]. NAD-dependent lysine deacetylase and desuccinylase that specifically removes acetyl and succinyl groups on target proteins. Modulates the activities of several proteins which are inactive in their acylated form. The chain is NAD-dependent protein deacylase 2 from Corynebacterium efficiens (strain DSM 44549 / YS-314 / AJ 12310 / JCM 11189 / NBRC 100395).